The sequence spans 206 residues: Ribosomal RNA large subunit methyltransferase E (206 aa).

S-adenosyl-L-methionine is bound by residues G63, W65, D83, D99, and D124. The Proton acceptor role is filled by K164.

This sequence belongs to the class I-like SAM-binding methyltransferase superfamily. RNA methyltransferase RlmE family.

The protein resides in the cytoplasm. The catalysed reaction is uridine(2552) in 23S rRNA + S-adenosyl-L-methionine = 2'-O-methyluridine(2552) in 23S rRNA + S-adenosyl-L-homocysteine + H(+). Its function is as follows. Specifically methylates the uridine in position 2552 of 23S rRNA at the 2'-O position of the ribose in the fully assembled 50S ribosomal subunit. This chain is Ribosomal RNA large subunit methyltransferase E, found in Buchnera aphidicola subsp. Acyrthosiphon pisum (strain APS) (Acyrthosiphon pisum symbiotic bacterium).